A 181-amino-acid chain; its full sequence is Ribonuclease HII (181 aa).

Residues 1 to 181 (MICGIDEVGR…SLHRKNFKLI (181 aa)) form the RNase H type-2 domain. 3 residues coordinate a divalent metal cation: Asp6, Glu7, and Asp98.

It belongs to the RNase HII family. Mn(2+) is required as a cofactor. Requires Mg(2+) as cofactor.

It is found in the cytoplasm. It carries out the reaction Endonucleolytic cleavage to 5'-phosphomonoester.. Functionally, endonuclease that specifically degrades the RNA of RNA-DNA hybrids. This is Ribonuclease HII from Borreliella burgdorferi (strain ZS7) (Borrelia burgdorferi).